The following is a 274-amino-acid chain: MTQQLQSIIDTAWDNRASLSPAAAPKEVTEAVDHVIEALNNGQLRVATREGVGQWTVHQWIKKAVLLSFRLKDNVLMQSGDLNFFDKVPTKFAGMTEAEIAATGVRVVPPAVARRGSFVAKGAILMPSYVNIGAYVDEGTMVDTWATVGSCAQVGKNVHLSGGVGLGGVLEPLQANPTIIEDNCFIGARSEIVEGVIVEENSVISMGVYIGQSTPIYDRATGETSYGRVPAGSVVVSGNLPKDNGRYSMYAAIIVKKVDAKTRSTTSLNDLLRD.

This sequence belongs to the transferase hexapeptide repeat family.

The protein localises to the cytoplasm. It carries out the reaction (S)-2,3,4,5-tetrahydrodipicolinate + succinyl-CoA + H2O = (S)-2-succinylamino-6-oxoheptanedioate + CoA. It functions in the pathway amino-acid biosynthesis; L-lysine biosynthesis via DAP pathway; LL-2,6-diaminopimelate from (S)-tetrahydrodipicolinate (succinylase route): step 1/3. The chain is 2,3,4,5-tetrahydropyridine-2,6-dicarboxylate N-succinyltransferase from Delftia acidovorans (strain DSM 14801 / SPH-1).